The chain runs to 586 residues: Frizzled-10-A (586 aa).

An N-terminal signal peptide occupies residues 1 to 26 (MDVSGVTGLLRGTALLLVLAAALCSA). The Extracellular segment spans residues 27–230 (ISSINPDRSG…DVYWSKDDKK (204 aa)). Positions 35–156 (SGDGRCQAIE…NDPNYLCMEA (122 aa)) constitute an FZ domain. 5 cysteine pairs are disulfide-bonded: C40–C101, C48–C94, C85–C123, C112–C153, and C116–C140. N-linked (GlcNAc...) asparagine glycosylation is present at N54. N159 carries an N-linked (GlcNAc...) asparagine glycan. Residues 161–199 (TDETPRGSSMLPPIFRPQRPSSGHEIYPKDPTSRSSCEN) form a disordered region. The chain crosses the membrane as a helical span at residues 231–251 (FAFIWIAIWSILCFFSSAFTV). At 252-267 (LTFLVDPLRFKYPERP) the chain is on the cytoplasmic side. A helical transmembrane segment spans residues 268 to 288 (IIFLSMCYCVYSVGYIIRLFA). Residues 289–315 (GADSIACDRDSGQLYVIQEGLESTGCT) lie on the Extracellular side of the membrane. A helical membrane pass occupies residues 316-336 (IVFLILYYFGMASSLWWVILT). Over 337 to 356 (LTWFLAAGKKWGHEAIEANS) the chain is Cytoplasmic. The helical transmembrane segment at 357–377 (SYFHLAAWAIPAVKTIMILVM) threads the bilayer. At 378 to 401 (RRVAGDELTGVCYVGSMDVNALTG) the chain is on the extracellular side. A helical membrane pass occupies residues 402-422 (FVLIPLACYLIIGTSFILSGF). The Cytoplasmic portion of the chain corresponds to 423–448 (VALFHIRRVMKTGGENTDKLEKLMVR). The chain crosses the membrane as a helical span at residues 449 to 469 (IGVFSVLYTVPATCVIACYFY). Topologically, residues 470-507 (ERLNMDFWKILATQDKCKMDSQTKTLDCTMTSSIPAVE) are extracellular. The helical transmembrane segment at 508–528 (IFMVKIFMLLVVGITSGMWIW) threads the bilayer. Topologically, residues 529–586 (TSKTVQSWQNVFSKRLKKRNRSKPASVITSAGIYKKPQHPPKVHHGKYESALQSPTCV) are cytoplasmic. A Lys-Thr-X-X-X-Trp motif, mediates interaction with the PDZ domain of Dvl family members motif is present at residues 531–536 (KTVQSW). The tract at residues 563–586 (KKPQHPPKVHHGKYESALQSPTCV) is disordered. A compositionally biased stretch (basic residues) spans 564-573 (KPQHPPKVHH). Positions 584 to 586 (TCV) match the PDZ-binding motif.

Belongs to the G-protein coupled receptor Fz/Smo family. In terms of tissue distribution, expressed in liver, lung, brain, testis, stomach, kidney, eye, skeletal muscle and skin.

It is found in the cell membrane. Functionally, receptor for Wnt proteins. Most of frizzled receptors are coupled to the beta-catenin canonical signaling pathway, which leads to the activation of disheveled proteins, inhibition of GSK-3 kinase, nuclear accumulation of beta-catenin and activation of Wnt target genes. A second signaling pathway involving PKC and calcium fluxes has been seen for some family members, but it is not yet clear if it represents a distinct pathway or if it can be integrated in the canonical pathway, as PKC seems to be required for Wnt-mediated inactivation of GSK-3 kinase. Both pathways seem to involve interactions with G-proteins. May be involved in transduction and intercellular transmission of polarity information during tissue morphogenesis and/or in differentiated tissues. Activated by Wnt8. Could have an antagonizing activity in the morphogenesis during development. In Xenopus laevis (African clawed frog), this protein is Frizzled-10-A (fzd10-a).